The primary structure comprises 488 residues: Ribulose bisphosphate carboxylase large chain 2 (488 aa).

2 residues coordinate substrate: Asn128 and Thr178. The Proton acceptor role is filled by Lys180. Lys182 serves as a coordination point for substrate. Residues Lys206, Asp208, and Glu209 each contribute to the Mg(2+) site. Lys206 bears the N6-carboxylysine mark. His298 functions as the Proton acceptor in the catalytic mechanism. Substrate is bound by residues Arg299, His331, and Ser383.

Belongs to the RuBisCO large chain family. Type I subfamily. In terms of assembly, heterohexadecamer of 8 large chains and 8 small chains. Requires Mg(2+) as cofactor.

The enzyme catalyses 2 (2R)-3-phosphoglycerate + 2 H(+) = D-ribulose 1,5-bisphosphate + CO2 + H2O. It catalyses the reaction D-ribulose 1,5-bisphosphate + O2 = 2-phosphoglycolate + (2R)-3-phosphoglycerate + 2 H(+). Its function is as follows. RuBisCO catalyzes two reactions: the carboxylation of D-ribulose 1,5-bisphosphate, the primary event in carbon dioxide fixation, as well as the oxidative fragmentation of the pentose substrate. Both reactions occur simultaneously and in competition at the same active site. This is Ribulose bisphosphate carboxylase large chain 2 from Nitrobacter hamburgensis (strain DSM 10229 / NCIMB 13809 / X14).